The primary structure comprises 164 residues: ATP synthase subunit b (164 aa).

The helical transmembrane segment at 6 to 26 (GELVGNFILVTGSVIVLLLLI) threads the bilayer.

This sequence belongs to the ATPase B chain family. F-type ATPases have 2 components, F(1) - the catalytic core - and F(0) - the membrane proton channel. F(1) has five subunits: alpha(3), beta(3), gamma(1), delta(1), epsilon(1). F(0) has three main subunits: a(1), b(2) and c(10-14). The alpha and beta chains form an alternating ring which encloses part of the gamma chain. F(1) is attached to F(0) by a central stalk formed by the gamma and epsilon chains, while a peripheral stalk is formed by the delta and b chains.

It localises to the cell membrane. F(1)F(0) ATP synthase produces ATP from ADP in the presence of a proton or sodium gradient. F-type ATPases consist of two structural domains, F(1) containing the extramembraneous catalytic core and F(0) containing the membrane proton channel, linked together by a central stalk and a peripheral stalk. During catalysis, ATP synthesis in the catalytic domain of F(1) is coupled via a rotary mechanism of the central stalk subunits to proton translocation. Its function is as follows. Component of the F(0) channel, it forms part of the peripheral stalk, linking F(1) to F(0). The chain is ATP synthase subunit b from Streptococcus pyogenes serotype M3 (strain ATCC BAA-595 / MGAS315).